Consider the following 403-residue polypeptide: S-adenosylmethionine synthase (403 aa).

Histidine 16 contributes to the ATP binding site. Mg(2+) is bound at residue aspartate 18. Glutamate 44 serves as a coordination point for K(+). L-methionine-binding residues include glutamate 57 and glutamine 100. The tract at residues glutamine 100–arginine 110 is flexible loop. The disordered stretch occupies residues glutamine 106–leucine 126. Residues aspartate 176–lysine 178, lysine 248–phenylalanine 249, aspartate 257, arginine 263–lysine 264, alanine 280, and lysine 284 each bind ATP. Aspartate 257 lines the L-methionine pocket. An L-methionine-binding site is contributed by lysine 288.

Belongs to the AdoMet synthase family. Homotetramer; dimer of dimers. The cofactor is Mg(2+). Requires K(+) as cofactor.

It localises to the cytoplasm. The catalysed reaction is L-methionine + ATP + H2O = S-adenosyl-L-methionine + phosphate + diphosphate. The protein operates within amino-acid biosynthesis; S-adenosyl-L-methionine biosynthesis; S-adenosyl-L-methionine from L-methionine: step 1/1. In terms of biological role, catalyzes the formation of S-adenosylmethionine (AdoMet) from methionine and ATP. The overall synthetic reaction is composed of two sequential steps, AdoMet formation and the subsequent tripolyphosphate hydrolysis which occurs prior to release of AdoMet from the enzyme. The sequence is that of S-adenosylmethionine synthase from Clavibacter michiganensis subsp. michiganensis (strain NCPPB 382).